The following is a 255-amino-acid chain: Probable transcriptional regulatory protein PCC8801_2028 (255 aa).

The protein belongs to the TACO1 family.

It localises to the cytoplasm. In Rippkaea orientalis (strain PCC 8801 / RF-1) (Cyanothece sp. (strain PCC 8801)), this protein is Probable transcriptional regulatory protein PCC8801_2028.